Reading from the N-terminus, the 294-residue chain is N-acetylmuramic acid 6-phosphate etherase (294 aa).

The SIS domain occupies 54-217; it reads VIQSFEEEGR…STASMIGVGK (164 aa). Glu-82 (proton donor) is an active-site residue. Glu-113 is a catalytic residue.

The protein belongs to the GCKR-like family. MurNAc-6-P etherase subfamily. Homodimer.

The catalysed reaction is N-acetyl-D-muramate 6-phosphate + H2O = N-acetyl-D-glucosamine 6-phosphate + (R)-lactate. Its pathway is amino-sugar metabolism; N-acetylmuramate degradation. In terms of biological role, specifically catalyzes the cleavage of the D-lactyl ether substituent of MurNAc 6-phosphate, producing GlcNAc 6-phosphate and D-lactate. This chain is N-acetylmuramic acid 6-phosphate etherase, found in Bacillus cereus (strain 03BB102).